The sequence spans 185 residues: MISAGDLRKGTTFEQDGQVYTVVDFLHVKPGKGAAFVRTKLRNVITGSVTDTTFNPSAKLQEAVIERKEMQYLYSDGELYYFMDQETFEQIPLEYAKVQEAIKFLKENMFAIIKFYKGEAFSVEAPNFVELQVTHTEPGVKGNTATNVLKPATLETGAVVSVPIFVNQGETIRVDTRSGEYMERV.

This sequence belongs to the elongation factor P family.

Its subcellular location is the cytoplasm. It functions in the pathway protein biosynthesis; polypeptide chain elongation. In terms of biological role, involved in peptide bond synthesis. Stimulates efficient translation and peptide-bond synthesis on native or reconstituted 70S ribosomes in vitro. Probably functions indirectly by altering the affinity of the ribosome for aminoacyl-tRNA, thus increasing their reactivity as acceptors for peptidyl transferase. The sequence is that of Elongation factor P from Clostridium kluyveri (strain ATCC 8527 / DSM 555 / NBRC 12016 / NCIMB 10680 / K1).